The primary structure comprises 131 residues: Hyastatin (131 aa).

A signal peptide spans 1 to 16 (MRVLLILVSLAALAHA). Intrachain disulfides connect C103–C117, C107–C124, and C118–C125. Residue K130 is modified to Lysine amide.

Strongly expressed in hemocytes, with weaker expression in gills and epidermis. Expressed at low levels in hepatopancreas.

It localises to the cytoplasmic granule. Its function is as follows. Antimicrobial peptide. Has strong antibacterial activity against the Gram-positive bacterium C.glutamicum (MIC=0.4 uM) and the Gram-negative bacterium E.coli (MIC=12.5 uM). Has weak antibacterial activity against the Gram-positive bacterium S.aureus (MIC&gt;50 uM) and the Gram-negative bacterium P.aeruginosa (MIC&gt;50 uM). Has antifungal activity against S.cerevisiae (MIC=12.5) and C.albicans (MIC=6.3 uM). Has weak antifungal activity against the mold B.cinerea. Presents chitin-binding activity. This Hyas araneus (Atlantic lyre crab) protein is Hyastatin.